A 38-amino-acid polypeptide reads, in one-letter code: Photosystem II reaction center protein L (38 aa).

The helical transmembrane segment at 17–37 (SLYWGLLLIFVLAVLFSSYIF) threads the bilayer.

It belongs to the PsbL family. PSII is composed of 1 copy each of membrane proteins PsbA, PsbB, PsbC, PsbD, PsbE, PsbF, PsbH, PsbI, PsbJ, PsbK, PsbL, PsbM, PsbT, PsbX, PsbY, PsbZ, Psb30/Ycf12, at least 3 peripheral proteins of the oxygen-evolving complex and a large number of cofactors. It forms dimeric complexes.

It is found in the plastid. It localises to the chloroplast thylakoid membrane. Functionally, one of the components of the core complex of photosystem II (PSII). PSII is a light-driven water:plastoquinone oxidoreductase that uses light energy to abstract electrons from H(2)O, generating O(2) and a proton gradient subsequently used for ATP formation. It consists of a core antenna complex that captures photons, and an electron transfer chain that converts photonic excitation into a charge separation. This subunit is found at the monomer-monomer interface and is required for correct PSII assembly and/or dimerization. The chain is Photosystem II reaction center protein L from Oltmannsiellopsis viridis (Marine flagellate).